The sequence spans 75 residues: MNSKHSSDFVVIKAVEDGVNVIGLTRGTDTKFHHSEKLDKGEVIIAQFTEHTSAIKVRGNALIQTAYGEMNSEKK.

This sequence belongs to the MtrB family. In terms of assembly, oligomer of 11 identical subunits arranged in doughnut-like structure.

Functionally, required for transcription attenuation control in the Trp operon. This trans-acting factor seems to recognize a 10 bases nucleotide sequence in the Trp leader transcript causing transcription termination. Binds the leader RNA only in presence of L-tryptophan. The sequence is that of Transcription attenuation protein MtrB from Bacillus velezensis (strain DSM 23117 / BGSC 10A6 / LMG 26770 / FZB42) (Bacillus amyloliquefaciens subsp. plantarum).